Here is a 237-residue protein sequence, read N- to C-terminus: RNA-binding protein 38 (237 aa).

Residues 1-24 (MLLQPACSPSVFPRPSAAPSAMHG) are disordered. One can recognise an RRM domain in the interval 32–109 (TKIFVGGLPY…RKANVNLAYL (78 aa)).

It belongs to the RBM38 family. As to expression, expressed in cardiac and skeletal muscle tissues.

It is found in the cytoplasm. It localises to the cytosol. Its subcellular location is the nucleus. Its function is as follows. RNA-binding protein that specifically bind the 3'-UTR of CDKN1A transcripts, leading to maintain the stability of CDKN1A transcripts, thereby acting as a mediator of the p53/TP53 family to regulate CDKN1A. CDKN1A is a cyclin-dependent kinase inhibitor transcriptionally regulated by the p53/TP53 family to induce cell cycle arrest. Has the ability to induce cell cycle arrest in G1 and maintain the stability of CDKN1A transcripts induced by p53/TP53. Also acts as a mRNA splicing factor. Specifically regulates the expression of FGFR2-IIIb, an epithelial cell-specific isoform of FGFR2. Plays a role in myogenic differentiation. This Mus musculus (Mouse) protein is RNA-binding protein 38 (Rbm38).